A 459-amino-acid polypeptide reads, in one-letter code: MVLTQKNLVKRTTESTETEAVSDLLVSELLILGLSLPALLRPFSRQSRKISAIPLLPVLALSVGALTVLGQGLTLDLTLSLVSSSVVCLTELPRLVAFSQGIPNDLYSAGARIARVLLLVAGVFTLVIVCLCAPEPGYRPSRSVVRSSFSLRLGNTKVNAGLLLSLANPYETSHLDNPSAPHPSENPQSRAHPKQNPVGVNVVVLKNTPQSAHRAHPETLELMLAERGYTVFVPYQDAYSPSYSAASLAAPMRTSPGVVLLSSALRGVPFDVPTPYVSRRANTIDAATFEDAHVPALFPALFALCRHAPTFVYAESAHEVMLSRFLQQQPHACAGVFFVLPDSAARGPHHAPAVQGAPPPVDTAGVASAVRGASRTLPAVYRQYVHAAEAAWAELASTDILAAYLAGLPRDRHRTRLQARATQVDQWIRAQLHLSEPVLPHAQALSHHTVHAGGTYDRT.

The next 2 membrane-spanning stretches (helical) occupy residues 53-75 (IPLL…GLTL) and 111-133 (ARIA…CLCA). The disordered stretch occupies residues 174-196 (HLDNPSAPHPSENPQSRAHPKQN).

The protein resides in the cell membrane. This is an uncharacterized protein from Treponema pallidum (strain Nichols).